The chain runs to 397 residues: CCA-adding enzyme (397 aa).

2 residues coordinate ATP: G26 and R29. CTP-binding residues include G26 and R29. Positions 39 and 41 each coordinate Mg(2+). Residues R110, D153, R156, R159, and R162 each contribute to the ATP site. CTP is bound by residues R110, D153, R156, R159, and R162.

This sequence belongs to the tRNA nucleotidyltransferase/poly(A) polymerase family. Bacterial CCA-adding enzyme type 3 subfamily. As to quaternary structure, homodimer. The cofactor is Mg(2+).

The catalysed reaction is a tRNA precursor + 2 CTP + ATP = a tRNA with a 3' CCA end + 3 diphosphate. It catalyses the reaction a tRNA with a 3' CCA end + 2 CTP + ATP = a tRNA with a 3' CCACCA end + 3 diphosphate. Functionally, catalyzes the addition and repair of the essential 3'-terminal CCA sequence in tRNAs without using a nucleic acid template. Adds these three nucleotides in the order of C, C, and A to the tRNA nucleotide-73, using CTP and ATP as substrates and producing inorganic pyrophosphate. tRNA 3'-terminal CCA addition is required both for tRNA processing and repair. Also involved in tRNA surveillance by mediating tandem CCA addition to generate a CCACCA at the 3' terminus of unstable tRNAs. While stable tRNAs receive only 3'-terminal CCA, unstable tRNAs are marked with CCACCA and rapidly degraded. The chain is CCA-adding enzyme from Bacillus cereus (strain 03BB102).